A 139-amino-acid polypeptide reads, in one-letter code: MKFTRMVKPNEVERKWHVIDAEGKTFGRLVTEIATLLRGKHKPNYTPHVDCGDYVVVINASKVKVSGNKESKEYHRHTGYFGGVKSEKLAELREKNPEKLFKLATRGMLPKTKLGRAMLKKLKVYPGSEHPHTAQVKGN.

This sequence belongs to the universal ribosomal protein uL13 family. In terms of assembly, part of the 50S ribosomal subunit.

Functionally, this protein is one of the early assembly proteins of the 50S ribosomal subunit, although it is not seen to bind rRNA by itself. It is important during the early stages of 50S assembly. This is Large ribosomal subunit protein uL13 from Nitratiruptor sp. (strain SB155-2).